Consider the following 223-residue polypeptide: MHQSSLSLDFFGSPHERVQKALASLRAGGGVLVVDDEDRENEGDLIFPAQTITVPQMAMLIRHCSGIVCLCLTDEYTRRLDLPMMTERNTNTQQTAFTISIEAATGVTTGVSAADRVATIQAAVAENASPENLRRPGHVFPLRAKPGGVLERRGHTEATVDLMRLAGHAPCGVLCELTLDDGSMARLPQVAAFAVAHAIPLCSVEDLVAWRHGLGEENIAISA.

D-ribulose 5-phosphate is bound by residues 39–40 (RE), D44, 152–156 (RRGHT), and E176. Mg(2+) is bound at residue E40. H155 lines the Mg(2+) pocket.

Belongs to the DHBP synthase family. In terms of assembly, homodimer. Requires Mg(2+) as cofactor. It depends on Mn(2+) as a cofactor.

The catalysed reaction is D-ribulose 5-phosphate = (2S)-2-hydroxy-3-oxobutyl phosphate + formate + H(+). It participates in cofactor biosynthesis; riboflavin biosynthesis; 2-hydroxy-3-oxobutyl phosphate from D-ribulose 5-phosphate: step 1/1. In terms of biological role, catalyzes the conversion of D-ribulose 5-phosphate to formate and 3,4-dihydroxy-2-butanone 4-phosphate. This chain is 3,4-dihydroxy-2-butanone 4-phosphate synthase, found in Desulfovibrio desulfuricans (strain ATCC 27774 / DSM 6949 / MB).